A 420-amino-acid chain; its full sequence is Phytoene synthase 1, chloroplastic (420 aa).

The transit peptide at 1–70 (MAAITLLRSA…GEIARTSPVY (70 aa)) directs the protein to the chloroplast.

This sequence belongs to the phytoene/squalene synthase family. Expressed in leaves. Highly expressed in developing leaves. Expressed at low levels in roots.

It localises to the plastid. The protein resides in the chloroplast membrane. Its subcellular location is the chloroplast. The protein localises to the plastoglobule. It catalyses the reaction 2 (2E,6E,10E)-geranylgeranyl diphosphate = 15-cis-phytoene + 2 diphosphate. Its function is as follows. Catalyzes the conversion of geranylgeranyl diphosphate to phytoene. Mediates the first committed step in carotenoid biosynthesis. This chain is Phytoene synthase 1, chloroplastic, found in Oryza sativa subsp. japonica (Rice).